The chain runs to 122 residues: Large ribosomal subunit protein bL17 (122 aa).

This sequence belongs to the bacterial ribosomal protein bL17 family. Part of the 50S ribosomal subunit. Contacts protein L32.

The protein is Large ribosomal subunit protein bL17 of Neisseria meningitidis serogroup C / serotype 2a (strain ATCC 700532 / DSM 15464 / FAM18).